A 99-amino-acid chain; its full sequence is uncharacterized protein (99 aa).

This is an uncharacterized protein from Dictyostelium discoideum (Social amoeba).